A 155-amino-acid polypeptide reads, in one-letter code: Ribosome maturation factor RimP (155 aa).

This sequence belongs to the RimP family.

The protein localises to the cytoplasm. Required for maturation of 30S ribosomal subunits. The protein is Ribosome maturation factor RimP of Lachnoclostridium phytofermentans (strain ATCC 700394 / DSM 18823 / ISDg) (Clostridium phytofermentans).